Reading from the N-terminus, the 130-residue chain is Small ribosomal subunit protein uS9 (130 aa).

Belongs to the universal ribosomal protein uS9 family.

This chain is Small ribosomal subunit protein uS9, found in Pseudomonas paraeruginosa (strain DSM 24068 / PA7) (Pseudomonas aeruginosa (strain PA7)).